A 648-amino-acid chain; its full sequence is Transketolase (648 aa).

His22 lines the substrate pocket. Residues His62 and 109–111 (GPL) contribute to the thiamine diphosphate site. Asp150 contacts Mg(2+). Thiamine diphosphate-binding residues include Gly151 and Asn180. Mg(2+)-binding residues include Asn180 and Val182. The substrate site is built by His252, Arg345, and Ser372. His252 serves as a coordination point for thiamine diphosphate. The Proton donor role is filled by Glu397. Thiamine diphosphate is bound at residue Phe423. 3 residues coordinate substrate: His447, Asp455, and Arg506.

It belongs to the transketolase family. In terms of assembly, homodimer. The cofactor is Mg(2+). Ca(2+) serves as cofactor. Mn(2+) is required as a cofactor. Requires Co(2+) as cofactor. It depends on thiamine diphosphate as a cofactor.

It carries out the reaction D-sedoheptulose 7-phosphate + D-glyceraldehyde 3-phosphate = aldehydo-D-ribose 5-phosphate + D-xylulose 5-phosphate. Catalyzes the transfer of a two-carbon ketol group from a ketose donor to an aldose acceptor, via a covalent intermediate with the cofactor thiamine pyrophosphate. This chain is Transketolase (tkt), found in Mycoplasma genitalium (strain ATCC 33530 / DSM 19775 / NCTC 10195 / G37) (Mycoplasmoides genitalium).